The following is a 143-amino-acid chain: Transcriptional regulator MraZ (143 aa).

SpoVT-AbrB domains lie at 5–47 (EYLH…PLDE) and 76–119 (ATEC…SQAL).

It belongs to the MraZ family. In terms of assembly, forms oligomers.

It localises to the cytoplasm. The protein resides in the nucleoid. In Desulfitobacterium hafniense (strain DSM 10664 / DCB-2), this protein is Transcriptional regulator MraZ.